An 81-amino-acid polypeptide reads, in one-letter code: Exodeoxyribonuclease 7 small subunit (81 aa).

The protein belongs to the XseB family. Heterooligomer composed of large and small subunits.

Its subcellular location is the cytoplasm. It carries out the reaction Exonucleolytic cleavage in either 5'- to 3'- or 3'- to 5'-direction to yield nucleoside 5'-phosphates.. In terms of biological role, bidirectionally degrades single-stranded DNA into large acid-insoluble oligonucleotides, which are then degraded further into small acid-soluble oligonucleotides. The polypeptide is Exodeoxyribonuclease 7 small subunit (Paramagnetospirillum magneticum (strain ATCC 700264 / AMB-1) (Magnetospirillum magneticum)).